We begin with the raw amino-acid sequence, 211 residues long: Large ribosomal subunit protein uL3 (211 aa).

N5-methylglutamine is present on Gln-150.

The protein belongs to the universal ribosomal protein uL3 family. In terms of assembly, part of the 50S ribosomal subunit. Forms a cluster with proteins L14 and L19. In terms of processing, methylated by PrmB.

Its function is as follows. One of the primary rRNA binding proteins, it binds directly near the 3'-end of the 23S rRNA, where it nucleates assembly of the 50S subunit. This chain is Large ribosomal subunit protein uL3, found in Pseudomonas fluorescens (strain SBW25).